Here is a 122-residue protein sequence, read N- to C-terminus: Small ribosomal subunit protein uS13 (122 aa).

Positions 95–122 (GLPVRGQRTKTNSRTRKGRRKTVANKKK) are disordered. Positions 101-122 (QRTKTNSRTRKGRRKTVANKKK) are enriched in basic residues.

Belongs to the universal ribosomal protein uS13 family. In terms of assembly, part of the 30S ribosomal subunit. Forms a loose heterodimer with protein S19. Forms two bridges to the 50S subunit in the 70S ribosome.

Located at the top of the head of the 30S subunit, it contacts several helices of the 16S rRNA. In the 70S ribosome it contacts the 23S rRNA (bridge B1a) and protein L5 of the 50S subunit (bridge B1b), connecting the 2 subunits; these bridges are implicated in subunit movement. Contacts the tRNAs in the A and P-sites. The protein is Small ribosomal subunit protein uS13 of Protochlamydia amoebophila (strain UWE25).